An 86-amino-acid chain; its full sequence is Small ribosomal subunit protein bS20 (86 aa).

Over residues 1-16 (MANIKSQEKRIRTNER) the composition is skewed to basic and acidic residues. Positions 1-25 (MANIKSQEKRIRTNERRRLRNQSVK) are disordered.

This sequence belongs to the bacterial ribosomal protein bS20 family.

Its function is as follows. Binds directly to 16S ribosomal RNA. The polypeptide is Small ribosomal subunit protein bS20 (Mycobacterium sp. (strain JLS)).